A 119-amino-acid polypeptide reads, in one-letter code: Holo-[acyl-carrier-protein] synthase (119 aa).

Mg(2+) is bound by residues Asp7 and Glu56.

It belongs to the P-Pant transferase superfamily. AcpS family. It depends on Mg(2+) as a cofactor.

It localises to the cytoplasm. It carries out the reaction apo-[ACP] + CoA = holo-[ACP] + adenosine 3',5'-bisphosphate + H(+). In terms of biological role, transfers the 4'-phosphopantetheine moiety from coenzyme A to a Ser of acyl-carrier-protein. This Chlamydia trachomatis serovar D (strain ATCC VR-885 / DSM 19411 / UW-3/Cx) protein is Holo-[acyl-carrier-protein] synthase.